The primary structure comprises 465 residues: UDP-N-acetylglucosamine 1-carboxyvinyltransferase (465 aa).

22-23 (KN) lines the phosphoenolpyruvate pocket. Arginine 94 is a binding site for UDP-N-acetyl-alpha-D-glucosamine. Catalysis depends on cysteine 119, which acts as the Proton donor. The residue at position 119 (cysteine 119) is a 2-(S-cysteinyl)pyruvic acid O-phosphothioketal. Aspartate 313 and valine 335 together coordinate UDP-N-acetyl-alpha-D-glucosamine.

It belongs to the EPSP synthase family. MurA subfamily.

The protein resides in the cytoplasm. It catalyses the reaction phosphoenolpyruvate + UDP-N-acetyl-alpha-D-glucosamine = UDP-N-acetyl-3-O-(1-carboxyvinyl)-alpha-D-glucosamine + phosphate. Its pathway is cell wall biogenesis; peptidoglycan biosynthesis. Functionally, cell wall formation. Adds enolpyruvyl to UDP-N-acetylglucosamine. This is UDP-N-acetylglucosamine 1-carboxyvinyltransferase from Protochlamydia amoebophila (strain UWE25).